A 596-amino-acid chain; its full sequence is Arginine--tRNA ligase (596 aa).

The 'HIGH' region signature appears at 128 to 138 (ANPTSSLHVGH).

Belongs to the class-I aminoacyl-tRNA synthetase family. Monomer.

The protein resides in the cytoplasm. It carries out the reaction tRNA(Arg) + L-arginine + ATP = L-arginyl-tRNA(Arg) + AMP + diphosphate. In Acinetobacter baumannii (strain AB307-0294), this protein is Arginine--tRNA ligase.